The chain runs to 371 residues: MGRAPCCEKVGIKRGRWTAEEDQILSNYIQSNGEGSWRSLPKNAGLKRCGKSCRLRWINYLRSDLKRGNITPEEEELVVKLHSTLGNRWSLIAGHLPGRTDNEIKNYWNSHLSRKLHNFIRKPSISQDVSAVIMTNASSAPPPPQAKRRLGRTSRSAMKPKIHRTKTRKTKKTSAPPEPNADVAGADKEALMVESSGAEAELGRPCDYYGDDCNKNLMSINGDNGVLTFDDDIIDLLLDESDPGHLYTNTTCGGDGELHNIRDSEGARGFSDTWNQGNLDCLLQSCPSVESFLNYDHQVNDASTDEFIDWDCVWQEGSDNNLWHEKENPDSMVSWLLDGDDEATIGNSNCENFGEPLDHDDESALVAWLLS.

HTH myb-type domains lie at 9 to 61 and 62 to 116; these read KVGI…INYL and RSDL…SRKL. 2 DNA-binding regions (H-T-H motif) span residues 37-61 and 89-112; these read WRSLPKNAGLKRCGKSCRLRWINYL and WSLIAGHLPGRTDNEIKNYWNSHL. Residues 136-183 form a disordered region; it reads NASSAPPPPQAKRRLGRTSRSAMKPKIHRTKTRKTKKTSAPPEPNADV. Residues 146–172 are compositionally biased toward basic residues; it reads AKRRLGRTSRSAMKPKIHRTKTRKTKK.

Expressed in stems and flower buds. Expressed in seedlings, roots, cotyledons and apical meristems.

It is found in the nucleus. Functionally, flavonol-specific transcription activator involved in the regulation of several genes of flavonoid biosynthesis. Activates the expression of CHS, CHI, F3H and FLS1. Controls flavonol biosynthesis mainly in the root. Confers tolerance to UV-B. In Arabidopsis thaliana (Mouse-ear cress), this protein is Transcription factor MYB12.